Reading from the N-terminus, the 441-residue chain is Damage-control phosphatase ARMT1 (441 aa).

A2 is subject to N-acetylalanine. N6-acetyllysine is present on K40. S102 is subject to Phosphoserine. Mn(2+)-binding residues include D253 and N254. Residue 253–254 (DN) participates in substrate binding. The S-adenosyl-L-methionine site is built by E258 and D291. Mn(2+) is bound at residue D291. Substrate-binding positions include 367–371 (DLNYR) and K404. Positions 401–404 (RTLK) match the Subfamily III RTxK motif motif.

This sequence belongs to the damage-control phosphatase family. Sugar phosphate phosphatase III subfamily. Mn(2+) is required as a cofactor. Requires Ni(2+) as cofactor. Post-translationally, automethylated.

The catalysed reaction is beta-D-fructose 1-phosphate + H2O = D-fructose + phosphate. The enzyme catalyses beta-D-fructose 6-phosphate = dihydroxyacetone + D-glyceraldehyde 3-phosphate. It catalyses the reaction L-glutamyl-[protein] + S-adenosyl-L-methionine = [protein]-L-glutamate 5-O-methyl ester + S-adenosyl-L-homocysteine. In terms of biological role, metal-dependent phosphatase that shows phosphatase activity against several substrates, including fructose-1-phosphate and fructose-6-phosphate. Its preference for fructose-1-phosphate, a strong glycating agent that causes DNA damage rather than a canonical yeast metabolite, suggests a damage-control function in hexose phosphate metabolism. Has also been shown to have O-methyltransferase activity that methylates glutamate residues of target proteins to form gamma-glutamyl methyl ester residues. Possibly methylates PCNA, suggesting it is involved in the DNA damage response. This Macaca fascicularis (Crab-eating macaque) protein is Damage-control phosphatase ARMT1.